The chain runs to 236 residues: 28 kDa antigen (236 aa).

The N-terminal stretch at 1 to 22 (MPNRRRCKLSTAISTVATLAIA) is a signal peptide. Positions 76–105 (PVPSLTGTDDPGNGLRTPGLTSPDLTNQEL) are disordered. Residues 94–105 (GLTSPDLTNQEL) are compositionally biased toward polar residues.

To M.tuberculosis ERP.

The sequence is that of 28 kDa antigen from Mycobacterium leprae (strain TN).